Here is a 470-residue protein sequence, read N- to C-terminus: Flavin-containing monooxygenase FMO GS-OX-like 6 (470 aa).

17–22 (GAGAAG) is an FAD binding site. 214–219 (GYQSSG) serves as a coordination point for NADP(+).

This sequence belongs to the FMO family. FAD serves as cofactor.

Its function is as follows. Catalyzes the conversion of methylthioalkyl glucosinolates of any chain length into methylsulfinylalkyl glucosinolates. The polypeptide is Flavin-containing monooxygenase FMO GS-OX-like 6 (Arabidopsis thaliana (Mouse-ear cress)).